A 375-amino-acid chain; its full sequence is Alanine racemase (375 aa).

Lys38 (proton acceptor; specific for D-alanine) is an active-site residue. An N6-(pyridoxal phosphate)lysine modification is found at Lys38. Residue Arg137 participates in substrate binding. Residue Tyr266 is the Proton acceptor; specific for L-alanine of the active site. Met314 is a substrate binding site.

Belongs to the alanine racemase family. It depends on pyridoxal 5'-phosphate as a cofactor.

It catalyses the reaction L-alanine = D-alanine. Its pathway is amino-acid biosynthesis; D-alanine biosynthesis; D-alanine from L-alanine: step 1/1. Its function is as follows. Catalyzes the interconversion of L-alanine and D-alanine. May also act on other amino acids. This is Alanine racemase (alr) from Cutibacterium acnes (strain DSM 16379 / KPA171202) (Propionibacterium acnes).